The primary structure comprises 288 residues: GCN5-related N-acetyltransferase 6, chloroplastic (288 aa).

A chloroplast-targeting transit peptide spans 1-111; the sequence is MSTISIHRTE…YWTAAWLRAE (111 aa). The region spanning 151-288 is the N-acetyltransferase domain; the sequence is SCIVAVKKEE…DDTYLLQYTS (138 aa). Acetyl-CoA contacts are provided by residues 215–217, 223–228, 254–256, and Tyr261; these read LCV, RQGIAC, and NSV. The Proton donor role is filled by Tyr261.

The protein belongs to the acetyltransferase family. GNAT subfamily. In terms of assembly, oligomer. In terms of processing, autoacetylated. In terms of tissue distribution, expressed in green tissues and in roots.

It is found in the plastid. The protein localises to the chloroplast. It localises to the cytoplasm. The protein resides in the perinuclear region. The enzyme catalyses an N-terminal L-alpha-aminoacyl-[protein] + acetyl-CoA = N-terminal N(alpha)-acetyl-L-alpha-aminoacyl-[protein] + CoA + H(+). It catalyses the reaction L-lysyl-[protein] + acetyl-CoA = N(6)-acetyl-L-lysyl-[protein] + CoA + H(+). The catalysed reaction is N-terminal L-alanyl-[protein] + acetyl-CoA = N-terminal N(alpha)-acetyl-L-alanyl-[protein] + CoA + H(+). It carries out the reaction N-terminal L-seryl-[protein] + acetyl-CoA = N-terminal N(alpha)-acetyl-L-seryl-[protein] + CoA + H(+). The enzyme catalyses N-terminal L-threonyl-[protein] + acetyl-CoA = N-terminal N(alpha)-acetyl-L-threonyl-[protein] + CoA + H(+). It catalyses the reaction N-terminal L-methionyl-[protein] + acetyl-CoA = N-terminal N(alpha)-acetyl-L-methionyl-[protein] + CoA + H(+). The catalysed reaction is N-terminal L-valyl-[protein] + acetyl-CoA = N-terminal N(alpha)-acetyl-L-valyl-[protein] + CoA + H(+). Protein acetyltransferase with dual specificity triggering both N-alpha-acetylation (NTA), with a large spectrum of modified N-termini, including methionine, alanine, serine, threonine and to a lower extent valine as substrates, and epsilon-lysine acetylation (KA). In Arabidopsis thaliana (Mouse-ear cress), this protein is GCN5-related N-acetyltransferase 6, chloroplastic.